The primary structure comprises 236 residues: Spore wall protein 12 (236 aa).

Positions 169–188 are disordered; it reads KKSKEPKTPSMVSRENDMER.

The protein belongs to the SWP12 family.

It is found in the spore wall. The protein is Spore wall protein 12 (SWP12) of Encephalitozoon cuniculi (strain GB-M1) (Microsporidian parasite).